The sequence spans 496 residues: Aspartic proteinase (496 aa).

Positions 1 to 24 (MAKRHLLLVTTCLWALSCALLLHA) are cleaved as a signal peptide. Positions 25–59 (SSDGFLRVNLNKKRLDKEDLTAAKLAQQGNRLLKT) are cleaved as a propeptide — activation peptide. Residues 77 to 493 (YYGVIGLGSP…DFGKDRIGFA (417 aa)) enclose the Peptidase A1 domain. The active site involves aspartate 95. 2 cysteine pairs are disulfide-bonded: cysteine 108/cysteine 114 and cysteine 273/cysteine 277. Residue aspartate 282 is part of the active site. Positions 307–407 (IISTECKEVV…NQLCERLPSP (101 aa)) constitute a Saposin B-type domain. Cystine bridges form between cysteine 312/cysteine 401, cysteine 337/cysteine 373, cysteine 343/cysteine 370, and cysteine 415/cysteine 452. A glycan (N-linked (GlcNAc...) asparagine) is linked at asparagine 387.

This sequence belongs to the peptidase A1 family.

Its subcellular location is the vacuole. Functionally, involved in the breakdown of propeptides of storage proteins in protein-storage vacuoles. The protein is Aspartic proteinase (RAP) of Oryza sativa subsp. japonica (Rice).